Consider the following 285-residue polypeptide: Probable endonuclease 4 (285 aa).

Residues histidine 67, histidine 107, glutamate 144, aspartate 178, histidine 181, histidine 215, aspartate 228, histidine 230, and glutamate 260 each contribute to the Zn(2+) site.

It belongs to the AP endonuclease 2 family. Requires Zn(2+) as cofactor.

The enzyme catalyses Endonucleolytic cleavage to 5'-phosphooligonucleotide end-products.. Its function is as follows. Endonuclease IV plays a role in DNA repair. It cleaves phosphodiester bonds at apurinic or apyrimidinic (AP) sites, generating a 3'-hydroxyl group and a 5'-terminal sugar phosphate. This chain is Probable endonuclease 4, found in Chloroflexus aurantiacus (strain ATCC 29366 / DSM 635 / J-10-fl).